Reading from the N-terminus, the 295-residue chain is Glycine N-acyltransferase (295 aa).

N6-acetyllysine; alternate occurs at positions 15, 126, and 140. 3 positions are modified to N6-succinyllysine; alternate: Lys-15, Lys-126, and Lys-140. Residue Lys-158 is modified to N6-acetyllysine. Lys-168 is modified (N6-succinyllysine). Lys-255 carries the post-translational modification N6-acetyllysine; alternate. N6-succinyllysine; alternate is present on Lys-255.

The protein belongs to the glycine N-acyltransferase family. In terms of tissue distribution, detected in liver (at protein level).

It localises to the mitochondrion. The catalysed reaction is an acyl-CoA + glycine = an N-acylglycine + CoA + H(+). The enzyme catalyses benzoyl-CoA + glycine = N-benzoylglycine + CoA + H(+). Mitochondrial acyltransferase which transfers an acyl group to the N-terminus of glycine and glutamine, although much less efficiently. Can conjugate a multitude of substrates to form a variety of N-acylglycines, thereby detoxify xenobiotics, such as benzoic acid or salicylic acid, and endogenous organic acids, such as isovaleric acid. The chain is Glycine N-acyltransferase (GLYAT) from Bos taurus (Bovine).